The primary structure comprises 306 residues: Glutathione transport system permease protein GsiC (306 aa).

Over 1–8 (MLNYVIKR) the chain is Cytoplasmic. The helical transmembrane segment at 9 to 29 (LLGLIPTLFIVSVLVFLFVHM) threads the bilayer. Residues 30–102 (LPGDPARLIA…SRFMPTLWLT (73 aa)) are Periplasmic-facing. Residues 95–292 (FMPTLWLTIT…LEFILINLVV (198 aa)) enclose the ABC transmembrane type-1 domain. A helical transmembrane segment spans residues 103–123 (ITSMVWAVIFGMAAGIIAAVW). Topologically, residues 124–134 (RNRWPDRLSMT) are cytoplasmic. Residues 135-155 (IAVSGISFPAFALGMLLIQVF) traverse the membrane as a helical segment. Over 156–168 (SVELGWLPTVGAD) the chain is Periplasmic. A helical membrane pass occupies residues 169 to 189 (SWQHYILPSLTLGAAVAAVMA). At 190–228 (RFTRASFVDVLSEDYMRTARAKGVSETWVVLKHGLRNAM) the chain is on the cytoplasmic side. A helical transmembrane segment spans residues 229-249 (IPVVTMMGLQFGFLLGGSIVV). The Periplasmic segment spans residues 250–277 (EKVFNWPGLGRLLVDSVEMRDYPVIQAE). A helical transmembrane segment spans residues 278 to 298 (ILLFSLEFILINLVVDVLYAA). Residues 299–306 (INPAIRYK) are Cytoplasmic-facing.

It belongs to the binding-protein-dependent transport system permease family. In terms of assembly, the complex is composed of two ATP-binding proteins (GsiA), two transmembrane proteins (GsiC and GsiD) and a solute-binding protein (GsiB).

The protein localises to the cell inner membrane. Part of the ABC transporter complex GsiABCD involved in glutathione import. Probably responsible for the translocation of the substrate across the membrane. The protein is Glutathione transport system permease protein GsiC of Escherichia coli O1:K1 / APEC.